Consider the following 113-residue polypeptide: MMRDIGLRVQPPAEKCDDPKCPWHGNLKIHGRVFEGIVVSDKPRKTVTVERQYYFYLNKYERYELRRSKIHAHNPPCINAKVGDKVLIAETRPLSKTKHFVVVAVLERAEERR.

Belongs to the universal ribosomal protein uS17 family. As to quaternary structure, part of the 30S ribosomal subunit.

Its function is as follows. One of the primary rRNA binding proteins, it binds specifically to the 5'-end of 16S ribosomal RNA. The chain is Small ribosomal subunit protein uS17 from Pyrococcus furiosus (strain ATCC 43587 / DSM 3638 / JCM 8422 / Vc1).